Consider the following 116-residue polypeptide: Phosphoribosyl-AMP cyclohydrolase (116 aa).

D78 is a Mg(2+) binding site. Position 79 (C79) interacts with Zn(2+). Mg(2+)-binding residues include D80 and D82. Zn(2+) is bound by residues C95 and C102.

It belongs to the PRA-CH family. In terms of assembly, homodimer. The cofactor is Mg(2+). It depends on Zn(2+) as a cofactor.

Its subcellular location is the cytoplasm. It catalyses the reaction 1-(5-phospho-beta-D-ribosyl)-5'-AMP + H2O = 1-(5-phospho-beta-D-ribosyl)-5-[(5-phospho-beta-D-ribosylamino)methylideneamino]imidazole-4-carboxamide. Its pathway is amino-acid biosynthesis; L-histidine biosynthesis; L-histidine from 5-phospho-alpha-D-ribose 1-diphosphate: step 3/9. Catalyzes the hydrolysis of the adenine ring of phosphoribosyl-AMP. This chain is Phosphoribosyl-AMP cyclohydrolase, found in Acidiphilium cryptum (strain JF-5).